An 829-amino-acid chain; its full sequence is Trimethylamine-N-oxide reductase (829 aa).

The segment at residues 1–31 is a signal peptide (tat-type signal); that stretch reads MNRRDFLKGIASSSFVVLGGSSVLTPLNALA. Ser180 provides a ligand contact to Mo-bis(molybdopterin guanine dinucleotide).

It belongs to the prokaryotic molybdopterin-containing oxidoreductase family. Mo-bis(molybdopterin guanine dinucleotide) serves as cofactor. Post-translationally, predicted to be exported by the Tat system. The position of the signal peptide cleavage has been experimentally proven.

It is found in the periplasm. It carries out the reaction trimethylamine + 2 Fe(III)-[cytochrome c] + H2O = trimethylamine N-oxide + 2 Fe(II)-[cytochrome c] + 3 H(+). Functionally, reduces trimethylamine-N-oxide (TMAO) into trimethylamine; an anaerobic reaction coupled to energy-yielding reactions. The polypeptide is Trimethylamine-N-oxide reductase (torA) (Shewanella massilia).